Reading from the N-terminus, the 293-residue chain is Acetylglutamate kinase (293 aa).

Substrate is bound by residues Gly71–Gly72, Arg93, and Asn186.

This sequence belongs to the acetylglutamate kinase family. ArgB subfamily.

It localises to the cytoplasm. It carries out the reaction N-acetyl-L-glutamate + ATP = N-acetyl-L-glutamyl 5-phosphate + ADP. It participates in amino-acid biosynthesis; L-arginine biosynthesis; N(2)-acetyl-L-ornithine from L-glutamate: step 2/4. Catalyzes the ATP-dependent phosphorylation of N-acetyl-L-glutamate. In Synechococcus sp. (strain WH7803), this protein is Acetylglutamate kinase.